Consider the following 425-residue polypeptide: Intermediate conductance calcium-activated potassium channel protein 4 (425 aa).

A helical transmembrane segment spans residues 30 to 50; sequence LVLAGTGIGLMVLHAEMLWFL. A helical membrane pass occupies residues 59–79; the sequence is LLVKCLITLSTAFLLCLIVVF. The chain crosses the membrane as a helical span at residues 105–121; that stretch reads VAQILLELLVCGVHPVP. Residues 141-161 traverse the membrane as a helical segment; that stretch reads GFLGEGEALLSLAMLLRLYLV. The chain crosses the membrane as a helical span at residues 205 to 225; the sequence is LLLGLTLGLWLTTAWVLSVAE. Residues 239-259 constitute an intramembrane region (pore-forming); sequence LWLIPITFLTIGYGDVVPGTL. Residues 263–283 traverse the membrane as a helical segment; that stretch reads IVCLCTGVMGVCCTALLVAVV. A calmodulin-binding region spans residues 284–345; the sequence is ARKLEFNKAE…RRHQRKMLAA (62 aa). Phosphohistidine is present on His-356.

The protein belongs to the potassium channel KCNN family. KCa3.1/KCNN4 subfamily. Homodimer. Homotetramer. Heterotetramer of potassium channel proteins. Interacts with MTMR6; this interaction leads to selective dephosphorylation of PI(3)P in a lipid microdomain adjacent to KCNN4, resulting in a decrease of intermediate conductance calcium-activated potassium channel activity. Interacts (via the C-tail domain) with CALM1; the calmodulin binding is constitutive, does not require calcium and mediates calcium-dependent gating and four calmodulin molecules bind to one channel tetramer. Phosphorylation at His-356 by NDKB activates the intermediate conductance calcium-activated potassium channel activity, and conversely it's dephosphorylation by PHPT1 inhibits this activity.

It localises to the cell membrane. The protein localises to the cell projection. The protein resides in the ruffle membrane. It carries out the reaction K(+)(in) = K(+)(out). In terms of biological role, intermediate conductance calcium-activated potassium channel that mediates the voltage-independent transmembrane transfer of potassium across the cell membrane through a constitutive interaction with calmodulin which binds the intracellular calcium allowing its opening. The current is characterized by a voltage-independent activation, an intracellular calcium concentration increase-dependent activation and a single-channel conductance of about 25 picosiemens. Also presents an inwardly rectifying current, thus reducing its already small outward conductance of potassium ions, which is particularly the case when the membrane potential displays positive values, above + 20 mV. Controls calcium influx during vascular contractility by being responsible of membrane hyperpolarization induced by vasoactive factors in proliferative vascular smooth muscle cell types. Following calcium influx, the consecutive activation of KCNN4 channel leads to a hyperpolarization of the cell membrane potential and hence an increase of the electrical driving force for further calcium influx promoting sustained calcium entry in response to stimulation with chemotactic peptides. Required for maximal calcium influx and proliferation during the reactivation of naive T-cells. Plays a role in the late stages of EGF-induced macropinocytosis through activation by PI(3)P. The sequence is that of Intermediate conductance calcium-activated potassium channel protein 4 from Rattus norvegicus (Rat).